Consider the following 155-residue polypeptide: Regulatory protein RecX (155 aa).

It belongs to the RecX family.

The protein resides in the cytoplasm. Functionally, modulates RecA activity. In Pseudomonas savastanoi pv. phaseolicola (strain 1448A / Race 6) (Pseudomonas syringae pv. phaseolicola (strain 1448A / Race 6)), this protein is Regulatory protein RecX.